The primary structure comprises 393 residues: 4-hydroxyphenylpyruvate dioxygenase (393 aa).

VOC domains are found at residues 17-148 and 179-339; these read AFDH…LLER and FLDH…IFSK. The Fe cation site is built by histidine 182, histidine 267, and glutamate 350.

The protein belongs to the 4HPPD family. Fe cation is required as a cofactor.

It carries out the reaction 3-(4-hydroxyphenyl)pyruvate + O2 = homogentisate + CO2. The protein operates within amino-acid degradation; L-phenylalanine degradation; acetoacetate and fumarate from L-phenylalanine: step 3/6. Key enzyme in the degradation of tyrosine. The polypeptide is 4-hydroxyphenylpyruvate dioxygenase (hpd-1) (Caenorhabditis briggsae).